Consider the following 314-residue polypeptide: Basic leucine zipper 63 (314 aa).

Ser29 carries the post-translational modification Phosphoserine; by KIN10. Residues 94–177 form a disordered region; the sequence is KPQDTSGRSD…SRRRKQAHLS (84 aa). Positions 96 to 133 are enriched in polar residues; that stretch reads QDTSGRSDNGGANESEQASLASSKATPMMSSAITSGSE. One can recognise a bZIP domain in the interval 151 to 214; it reads NVKRVKRMLS…NDASVENRVL (64 aa). The segment at 153–172 is basic motif; the sequence is KRVKRMLSNRESARRSRRRK. A Nuclear localization signal 1 motif is present at residues 155 to 162; it reads VKRMLSNR. Residues 179 to 193 are leucine-zipper; the sequence is LETQVSQLRVENSKL. Positions 253 to 274 are disordered; the sequence is SLPSETSNSPDTTSSQVTTPEI. 2 positions are modified to phosphoserine; by KIN10: Ser294 and Ser300. The short motif at 295-302 is the Nuclear localization signal 2 element; sequence MRRVESLE.

The protein belongs to the bZIP family. In terms of assembly, homodimer. Forms a heterodimer with LSD1, BZIP1, BZIP2, BZIP9, BZIP10, BZIP11, BZIP25, BZIP44 and BZIP53. Interacts with KIN10 and SNF4. Component of a ternary complex composed of BZIP2-BZIP63 heterodimer and KIN10. Post-translationally, phosphorylated. The phosphorylation at Ser-29, Ser-294 and Ser-300 by KIN10 strongly enhances its ability to form homo- as well as heterodimers and are then essential for its transcriptional activity. In terms of tissue distribution, expressed in roots, shoots, young leaves, pollen, and flowers.

It localises to the nucleus. Up-regulated by KIN10 under a phosphorylation-dependent manner. In terms of biological role, transcription factor involved in controlling responses to starvation. BZIP2-BZIP63-KIN10 complex binds to the ETFQO promoter to up-regulate its transcription. This is Basic leucine zipper 63 (BZIP63) from Arabidopsis thaliana (Mouse-ear cress).